Reading from the N-terminus, the 245-residue chain is MKRVAAVIEYDGSNFFGYQGQPDVRTVQGVIEDALERIFKQRIYTQAAGRTDAGVHANGQLIAFNCPNDRMTTEDIKNAMNANLPDDVYVKEVFEVSKNFHPRFDVKKRIYHYFILTSKQKNVFLRKYVWWFPYELDLDAMRKAAKYLEGTHDFTSFKTGSDERDPVRTIYRIRILRLKNDLVLIRVEGRSFLRRMVRNIVAALVKVGLKQWEPEKMKEVLEARDRSAAAGTAPAHGLYFYKVLF.

The Nucleophile role is filled by Asp-52. Tyr-111 is a binding site for substrate.

This sequence belongs to the tRNA pseudouridine synthase TruA family. Homodimer.

The catalysed reaction is uridine(38/39/40) in tRNA = pseudouridine(38/39/40) in tRNA. Formation of pseudouridine at positions 38, 39 and 40 in the anticodon stem and loop of transfer RNAs. In Thermotoga sp. (strain RQ2), this protein is tRNA pseudouridine synthase A.